Here is a 253-residue protein sequence, read N- to C-terminus: Ubiquinone/menaquinone biosynthesis C-methyltransferase UbiE (253 aa).

S-adenosyl-L-methionine contacts are provided by residues T76, D97, 125 to 126, and S142; that span reads NA.

The protein belongs to the class I-like SAM-binding methyltransferase superfamily. MenG/UbiE family.

It carries out the reaction a 2-demethylmenaquinol + S-adenosyl-L-methionine = a menaquinol + S-adenosyl-L-homocysteine + H(+). It catalyses the reaction a 2-methoxy-6-(all-trans-polyprenyl)benzene-1,4-diol + S-adenosyl-L-methionine = a 5-methoxy-2-methyl-3-(all-trans-polyprenyl)benzene-1,4-diol + S-adenosyl-L-homocysteine + H(+). Its pathway is quinol/quinone metabolism; menaquinone biosynthesis; menaquinol from 1,4-dihydroxy-2-naphthoate: step 2/2. It functions in the pathway cofactor biosynthesis; ubiquinone biosynthesis. In terms of biological role, methyltransferase required for the conversion of demethylmenaquinol (DMKH2) to menaquinol (MKH2) and the conversion of 2-polyprenyl-6-methoxy-1,4-benzoquinol (DDMQH2) to 2-polyprenyl-3-methyl-6-methoxy-1,4-benzoquinol (DMQH2). This Xanthomonas oryzae pv. oryzae (strain MAFF 311018) protein is Ubiquinone/menaquinone biosynthesis C-methyltransferase UbiE.